The sequence spans 410 residues: Neurotensin receptor type 2 (410 aa).

Residues 1–32 are Extracellular-facing; sequence METSSPRPPRPSSNPGLSLDARLGVDTRLWAK. The helical transmembrane segment at 33–55 threads the bilayer; sequence VLFTALYALIWALGAAGNALSAH. The Cytoplasmic portion of the chain corresponds to 56 to 64; sequence VVLKARAGR. A helical transmembrane segment spans residues 65-87; that stretch reads AGRLRHHVLSLALAGLLLLLVGV. The Extracellular portion of the chain corresponds to 88 to 109; sequence PVELYSFVWFHYPWVFGDLGCR. Cys-108 and Cys-194 are oxidised to a cystine. Residues 110-131 form a helical membrane-spanning segment; that stretch reads GYYFVHELCAYATVLSVAGLSA. At 132-154 the chain is on the cytoplasmic side; it reads ERCLAVCQPLRARSLLTPRRTRW. Residues 155 to 176 form a helical membrane-spanning segment; sequence LVALSWAASLGLALPMAVIMGQ. The Extracellular segment spans residues 177 to 217; it reads KHELETADGEPEPASRVCTVLVSRTALQVFIQVNVLVSFVL. Residues 218–237 traverse the membrane as a helical segment; sequence PLALTAFLNGVTVSHLLALC. At 238 to 297 the chain is on the cytoplasmic side; that stretch reads SQVPSTSTPGSSTPSRLELLSEEGLLSFIVWKKTFIQGGQVSLVRHKDVRRIRSLQRSVQ. Residues 298 to 318 form a helical membrane-spanning segment; that stretch reads VLRAIVVMYVICWLPYHARRL. Topologically, residues 319–337 are extracellular; the sequence is MYCYVPDDAWTDPLYNFYH. Residues 338-358 form a helical membrane-spanning segment; the sequence is YFYMVTNTLFYVSSAVTPLLY. Topologically, residues 359–410 are cytoplasmic; the sequence is NAVSSSFRKLFLEAVSSLCGEHHPMKRLPPKPQSPTLMDTASGFGDPPETRT. Residue Cys-377 is the site of S-palmitoyl cysteine attachment. A disordered region spans residues 381 to 410; it reads HPMKRLPPKPQSPTLMDTASGFGDPPETRT.

This sequence belongs to the G-protein coupled receptor 1 family. Neurotensin receptor subfamily. NTSR2 sub-subfamily. In terms of tissue distribution, expressed in prostate (at protein level).

Its subcellular location is the cell membrane. In terms of biological role, receptor for the tridecapeptide neurotensin. It is associated with G proteins that activate a phosphatidylinositol-calcium second messenger system. The protein is Neurotensin receptor type 2 (NTSR2) of Homo sapiens (Human).